A 430-amino-acid chain; its full sequence is tRNA(Ile)-lysidine synthase (430 aa).

21–26 (SGGLDS) lines the ATP pocket.

It belongs to the tRNA(Ile)-lysidine synthase family.

Its subcellular location is the cytoplasm. The enzyme catalyses cytidine(34) in tRNA(Ile2) + L-lysine + ATP = lysidine(34) in tRNA(Ile2) + AMP + diphosphate + H(+). Functionally, ligates lysine onto the cytidine present at position 34 of the AUA codon-specific tRNA(Ile) that contains the anticodon CAU, in an ATP-dependent manner. Cytidine is converted to lysidine, thus changing the amino acid specificity of the tRNA from methionine to isoleucine. The chain is tRNA(Ile)-lysidine synthase from Salmonella heidelberg (strain SL476).